Here is a 174-residue protein sequence, read N- to C-terminus: FMN reductase (NADH) RutF (174 aa).

It belongs to the non-flavoprotein flavin reductase family. RutF subfamily.

It carries out the reaction FMNH2 + NAD(+) = FMN + NADH + 2 H(+). In terms of biological role, catalyzes the reduction of FMN to FMNH2 which is used to reduce pyrimidine by RutA via the Rut pathway. The protein is FMN reductase (NADH) RutF of Stutzerimonas stutzeri (strain A1501) (Pseudomonas stutzeri).